The sequence spans 400 residues: Tyrosine--tRNA ligase (400 aa).

The short motif at 42 to 51 (PTAPDLHLGH) is the 'HIGH' region element. A 'KMSKS' region motif is present at residues 226–230 (KMSKS). K229 serves as a coordination point for ATP. The 61-residue stretch at 339 to 399 (FSISYILRRA…GKKKIAQIFV (61 aa)) folds into the S4 RNA-binding domain.

It belongs to the class-I aminoacyl-tRNA synthetase family. TyrS type 2 subfamily. Homodimer.

It is found in the cytoplasm. It catalyses the reaction tRNA(Tyr) + L-tyrosine + ATP = L-tyrosyl-tRNA(Tyr) + AMP + diphosphate + H(+). Its function is as follows. Catalyzes the attachment of tyrosine to tRNA(Tyr) in a two-step reaction: tyrosine is first activated by ATP to form Tyr-AMP and then transferred to the acceptor end of tRNA(Tyr). The chain is Tyrosine--tRNA ligase from Hahella chejuensis (strain KCTC 2396).